Reading from the N-terminus, the 154-residue chain is uncharacterized protein (154 aa).

The 116-residue stretch at 13 to 128 folds into the HotDog ACOT-type domain; the sequence is SKGVLLLRTL…VFTFVAVDNN (116 aa).

Belongs to the acyl coenzyme A hydrolase family.

This is an uncharacterized protein from Haemophilus influenzae (strain ATCC 51907 / DSM 11121 / KW20 / Rd).